Consider the following 233-residue polypeptide: Hydroxyacylglutathione hydrolase (233 aa).

Residues histidine 52, histidine 54, aspartate 56, histidine 57, histidine 108, aspartate 125, and histidine 163 each contribute to the Zn(2+) site.

The protein belongs to the metallo-beta-lactamase superfamily. Glyoxalase II family. In terms of assembly, monomer. Zn(2+) is required as a cofactor.

The catalysed reaction is an S-(2-hydroxyacyl)glutathione + H2O = a 2-hydroxy carboxylate + glutathione + H(+). Its pathway is secondary metabolite metabolism; methylglyoxal degradation; (R)-lactate from methylglyoxal: step 2/2. Thiolesterase that catalyzes the hydrolysis of S-D-lactoyl-glutathione to form glutathione and D-lactic acid. The protein is Hydroxyacylglutathione hydrolase of Histophilus somni (strain 129Pt) (Haemophilus somnus).